The following is a 236-amino-acid chain: Ribonuclease 3 (236 aa).

Residues 7–136 (KSYILKKFNI…FIGALYLDQG (130 aa)) form the RNase III domain. E49 serves as a coordination point for Mg(2+). The active site involves D53. Mg(2+) is bound by residues D122 and E125. Residue E125 is part of the active site. In terms of domain architecture, DRBM spans 162–232 (DFKSRLQERL…ARAALKILED (71 aa)).

This sequence belongs to the ribonuclease III family. In terms of assembly, homodimer. It depends on Mg(2+) as a cofactor.

Its subcellular location is the cytoplasm. The catalysed reaction is Endonucleolytic cleavage to 5'-phosphomonoester.. Its function is as follows. Digests double-stranded RNA. Involved in the processing of primary rRNA transcript to yield the immediate precursors to the large and small rRNAs (23S and 16S). Processes some mRNAs, and tRNAs when they are encoded in the rRNA operon. Processes pre-crRNA and tracrRNA of type II CRISPR loci if present in the organism. In Leuconostoc mesenteroides subsp. mesenteroides (strain ATCC 8293 / DSM 20343 / BCRC 11652 / CCM 1803 / JCM 6124 / NCDO 523 / NBRC 100496 / NCIMB 8023 / NCTC 12954 / NRRL B-1118 / 37Y), this protein is Ribonuclease 3.